The sequence spans 545 residues: Glucose-6-phosphate isomerase (545 aa).

E351 (proton donor) is an active-site residue. Active-site residues include H382 and K510.

The protein belongs to the GPI family.

It is found in the cytoplasm. It carries out the reaction alpha-D-glucose 6-phosphate = beta-D-fructose 6-phosphate. Its pathway is carbohydrate biosynthesis; gluconeogenesis. It participates in carbohydrate degradation; glycolysis; D-glyceraldehyde 3-phosphate and glycerone phosphate from D-glucose: step 2/4. In terms of biological role, catalyzes the reversible isomerization of glucose-6-phosphate to fructose-6-phosphate. The polypeptide is Glucose-6-phosphate isomerase (Shewanella baltica (strain OS155 / ATCC BAA-1091)).